The chain runs to 236 residues: Peroxisomal membrane protein 11D (236 aa).

Gly-2 is subject to N-acetylglycine. Topologically, residues 2–92 (GTTLDVSRAE…LPLVLLGKSK (91 aa)) are cytoplasmic. The helical transmembrane segment at 93-109 (NALLSTFLFLDQIVWLG) threads the bilayer. The Lumenal segment spans residues 110 to 207 (RSGIYKNKER…LLQLAPTKIT (98 aa)). The helical transmembrane segment at 208–227 (PRVTGAFGFITSIISCYQLL) threads the bilayer. At 228–236 (PTRPKIKTP) the chain is on the cytoplasmic side.

Belongs to the peroxin-11 family. As to quaternary structure, homooligomer. Interacts with ARC5 and FIS1B on peroxisomes. In terms of tissue distribution, expressed in developing siliques.

Its subcellular location is the peroxisome membrane. In terms of biological role, involved in peroxisomal proliferation. Promotes peroxisomal duplication, aggregation or elongation without fission. This Arabidopsis thaliana (Mouse-ear cress) protein is Peroxisomal membrane protein 11D (PEX11D).